Reading from the N-terminus, the 187-residue chain is MAIGMSELKKGLKIELGGVPYRIVEYQHVKPGKGAAFVRAKIKSFLDGKVIEKTFHAGDKCEEPNLVEKTMQYLYHDGDTYQFMDIESYEQIALNDSQVGEASKWMLDGMQVQVLLHNDKAISVDVPQVVALKIVETAPNFKGDTSSASKKPATLETGAVVQVPFHVLEGEVIKVNTETEEYLEKVK.

It belongs to the elongation factor P family.

The protein resides in the cytoplasm. It functions in the pathway protein biosynthesis; polypeptide chain elongation. Involved in peptide bond synthesis. Stimulates efficient translation and peptide-bond synthesis on native or reconstituted 70S ribosomes in vitro. Probably functions indirectly by altering the affinity of the ribosome for aminoacyl-tRNA, thus increasing their reactivity as acceptors for peptidyl transferase. The polypeptide is Elongation factor P (Helicobacter pylori (strain P12)).